The chain runs to 386 residues: Alcohol dehydrogenase-like 2 (386 aa).

Cys-51, Thr-53, His-74, Cys-104, Cys-107, Cys-110, Cys-118, and Cys-183 together coordinate Zn(2+). An alcohol contacts are provided by Thr-53 and His-74. An NAD(+)-binding site is contributed by Thr-53. NAD(+)-binding positions include Gly-208–Gly-213, Asp-232, Lys-237, Leu-302–Met-304, Phe-329, and Arg-379.

Belongs to the zinc-containing alcohol dehydrogenase family. Class-III subfamily. As to quaternary structure, homodimer. Requires Zn(2+) as cofactor.

Its subcellular location is the cytoplasm. The enzyme catalyses a primary alcohol + NAD(+) = an aldehyde + NADH + H(+). The catalysed reaction is a secondary alcohol + NAD(+) = a ketone + NADH + H(+). This is Alcohol dehydrogenase-like 2 from Arabidopsis thaliana (Mouse-ear cress).